The sequence spans 679 residues: Transmembrane protein 214-B (679 aa).

A disordered region spans residues 1–94 (MASGAPDGKW…KKKPQSGDSV (94 aa)). The segment covering 18–30 (KSGERREGERKAL) has biased composition (basic and acidic residues). N-linked (GlcNAc...) asparagine glycosylation is found at Asn-70, Asn-298, and Asn-322. 2 helical membrane passes run 468–488 (GGFPWWRLIVIAFVFLFGSVL) and 606–626 (LLLHLHQTYLLPAVTYLEAAV).

This sequence belongs to the TMEM214 family. In terms of assembly, constitutively interacts with CASP4; required for the localization of procaspase 4 to the ER.

It is found in the endoplasmic reticulum membrane. Functionally, critical mediator, in cooperation with CASP4, of endoplasmic reticulum-stress induced apoptosis. Required or the activation of CASP4 following endoplasmic reticulum stress. This chain is Transmembrane protein 214-B (tmem214-b), found in Xenopus laevis (African clawed frog).